The primary structure comprises 418 residues: Centromere protein U (418 aa).

Basic residues predominate over residues Met1 to Pro11. The tract at residues Met1–His76 is disordered. Residues Arg6–Thr23 carry the Nuclear localization signal motif. Over residues His12–Asp42 the composition is skewed to basic and acidic residues. A Phosphothreonine; by PLK1 modification is found at Thr78. The interval Ser88–Ile227 is disordered. Thr98 carries the post-translational modification Phosphothreonine. Phosphoserine is present on Ser108. Thr110 bears the Phosphothreonine mark. Residues Ser111, Ser116, and Ser120 each carry the phosphoserine modification. Positions Ser124–Arg133 are enriched in basic residues. A phosphoserine mark is found at Ser136, Ser139, and Ser141. A compositionally biased stretch (basic and acidic residues) spans Ser145–Ile165. Polar residues predominate over residues Ser180–Pro193. A Glycyl lysine isopeptide (Lys-Gly) (interchain with G-Cter in SUMO2) cross-link involves residue Lys185. Ser190 and Ser194 each carry phosphoserine. The span at Thr208–Ser224 shows a compositional bias: basic residues. The residue at position 232 (Ser232) is a Phosphoserine. Coiled coils occupy residues Gln297–Tyr356 and Leu397–Gln417. The short motif at Lys303–Met320 is the Nuclear localization signal element.

It belongs to the CENP-U/AME1 family. In terms of assembly, component of the CENPA-NAC complex, at least composed of CENPA, CENPC, CENPH, CENPM, CENPN, CENPT and CENPU. The CENPA-NAC complex interacts with the CENPA-CAD complex, composed of CENPI, CENPK, CENPL, CENPO, CENPP, CENPQ, CENPR and CENPS. Interacts with MLF1. Interacts with PLK1. As to quaternary structure, (Microbial infection) Interacts with the N-terminal domain of Kaposi's sarcoma-associated herpesvirus latent nuclear antigen (LNA). In terms of processing, phosphorylated by PLK1 at Thr-78, creating a self-tethering site that specifically interacts with the polo-box domain of PLK1. As to expression, expressed at high levels in the testis, fetal liver, thymus, bone marrow and at lower levels in the lymph nodes, placenta, colon and spleen. Present in all cell lines examined, including B-cells, T-cells, epithelial cells and fibroblast cells. Expressed at high levels in glioblastoma cell lines.

It is found in the cytoplasm. It localises to the nucleus. The protein localises to the chromosome. Its subcellular location is the centromere. The protein resides in the kinetochore. In terms of biological role, component of the CENPA-NAC (nucleosome-associated) complex, a complex that plays a central role in assembly of kinetochore proteins, mitotic progression and chromosome segregation. The CENPA-NAC complex recruits the CENPA-CAD (nucleosome distal) complex and may be involved in incorporation of newly synthesized CENPA into centromeres. Plays an important role in the correct PLK1 localization to the mitotic kinetochores. A scaffold protein responsible for the initial recruitment and maintenance of the kinetochore PLK1 population until its degradation. Involved in transcriptional repression. This Homo sapiens (Human) protein is Centromere protein U (CENPU).